A 447-amino-acid polypeptide reads, in one-letter code: N-succinylarginine dihydrolase (447 aa).

Substrate contacts are provided by residues 19 to 28 (AGLSFGNEAS), Asn-110, and 137 to 138 (HR). Glu-174 is an active-site residue. Residue Arg-212 participates in substrate binding. Residue His-248 is part of the active site. Asp-250 and Asn-359 together coordinate substrate. Catalysis depends on Cys-365, which acts as the Nucleophile.

Belongs to the succinylarginine dihydrolase family. As to quaternary structure, homodimer.

It carries out the reaction N(2)-succinyl-L-arginine + 2 H2O + 2 H(+) = N(2)-succinyl-L-ornithine + 2 NH4(+) + CO2. The protein operates within amino-acid degradation; L-arginine degradation via AST pathway; L-glutamate and succinate from L-arginine: step 2/5. In terms of biological role, catalyzes the hydrolysis of N(2)-succinylarginine into N(2)-succinylornithine, ammonia and CO(2). The sequence is that of N-succinylarginine dihydrolase from Escherichia coli (strain K12 / MC4100 / BW2952).